We begin with the raw amino-acid sequence, 230 residues long: Mediator of RNA polymerase II transcription subunit 7 (230 aa).

Disordered regions lie at residues 1-22 and 206-230; these read MSRE…PPPP and QSQS…SDSQ.

It belongs to the Mediator complex subunit 7 family. In terms of assembly, component of the Mediator complex.

The protein localises to the nucleus. Its function is as follows. Component of the Mediator complex, a coactivator involved in the regulated transcription of nearly all RNA polymerase II-dependent genes. Mediator functions as a bridge to convey information from gene-specific regulatory proteins to the basal RNA polymerase II transcription machinery. Mediator is recruited to promoters by direct interactions with regulatory proteins and serves as a scaffold for the assembly of a functional preinitiation complex with RNA polymerase II and the general transcription factors. This Candida glabrata (strain ATCC 2001 / BCRC 20586 / JCM 3761 / NBRC 0622 / NRRL Y-65 / CBS 138) (Yeast) protein is Mediator of RNA polymerase II transcription subunit 7 (MED7).